We begin with the raw amino-acid sequence, 436 residues long: UPF0597 protein YhaM (436 aa).

Belongs to the UPF0597 family.

This Escherichia coli O45:K1 (strain S88 / ExPEC) protein is UPF0597 protein YhaM.